The primary structure comprises 294 residues: Putative glutamine amidotransferase HI_1037 (294 aa).

The active site involves Cys-18. The Glutamine amidotransferase type-2 domain maps to 18 to 266; the sequence is CQLLGMNCNT…NGGFVFFKNG (249 aa).

This chain is Putative glutamine amidotransferase HI_1037, found in Haemophilus influenzae (strain ATCC 51907 / DSM 11121 / KW20 / Rd).